Reading from the N-terminus, the 564-residue chain is Kelch repeat and BTB domain-containing protein 1 (564 aa).

The region spanning 21–88 (CDINIVINDE…IYGIPLSLTN (68 aa)) is the BTB domain. The BACK domain occupies 123 to 219 (CIDFYIYADK…SLLSPQVIKS (97 aa)). Kelch repeat units lie at residues 252–297 (IELI…VLDN), 298–346 (IIYM…ADDE), 347–395 (YIYC…MLNG), 397–441 (IYVI…VHDG), and 442–492 (KIYI…STHN).

Interacts (via BTB domain) with host CUL3.

It localises to the host cytoplasm. Its function is as follows. Probable substrate-specific adapter of CUL3-containing E3 ubiquitin-protein ligases which mediate the ubiquitination and subsequent proteasomal degradation of host target proteins. The chain is Kelch repeat and BTB domain-containing protein 1 (KBTB1) from Bos taurus (Bovine).